The sequence spans 72 residues: Teretoxin Tan11.1 (72 aa).

Positions 1–21 (MLATKMSVTFCFLLMLTTVML) are cleaved as a signal peptide. Residues 22–31 (PTEAKTVAGR) constitute a propeptide that is removed on maturation.

Belongs to the teretoxin H (TH) superfamily. In terms of processing, contains 4 disulfide bonds. Expressed by the venom duct.

Its subcellular location is the secreted. In Terebra anilis (Auger snail), this protein is Teretoxin Tan11.1.